Here is a 391-residue protein sequence, read N- to C-terminus: Phosphoglycerate kinase (391 aa).

Residues 21–23 (DLN), arginine 36, 59–62 (HRGR), arginine 113, and arginine 146 each bind substrate. Residues lysine 197, glutamate 314, and 340–343 (GGDT) each bind ATP.

It belongs to the phosphoglycerate kinase family. As to quaternary structure, monomer.

Its subcellular location is the cytoplasm. The catalysed reaction is (2R)-3-phosphoglycerate + ATP = (2R)-3-phospho-glyceroyl phosphate + ADP. The protein operates within carbohydrate degradation; glycolysis; pyruvate from D-glyceraldehyde 3-phosphate: step 2/5. The chain is Phosphoglycerate kinase from Ruthia magnifica subsp. Calyptogena magnifica.